Consider the following 69-residue polypeptide: UPF0437 protein AZC_3451 (69 aa).

The protein belongs to the UPF0437 family.

This chain is UPF0437 protein AZC_3451, found in Azorhizobium caulinodans (strain ATCC 43989 / DSM 5975 / JCM 20966 / LMG 6465 / NBRC 14845 / NCIMB 13405 / ORS 571).